A 390-amino-acid polypeptide reads, in one-letter code: S-adenosylmethionine synthase 4 (390 aa).

Glu-9 contributes to the Mg(2+) binding site. His-15 serves as a coordination point for ATP. K(+) is bound at residue Glu-43. L-methionine contacts are provided by Glu-56 and Gln-99. Residues 167–169 (DGK), 235–238 (SGRF), Asp-246, 252–253 (RK), Ala-269, Lys-273, and Lys-277 each bind ATP. Asp-246 serves as a coordination point for L-methionine. Lys-277 provides a ligand contact to L-methionine.

It belongs to the AdoMet synthase family. As to quaternary structure, homotetramer. Requires Mn(2+) as cofactor. It depends on Mg(2+) as a cofactor. The cofactor is Co(2+). K(+) serves as cofactor.

It localises to the cytoplasm. The catalysed reaction is L-methionine + ATP + H2O = S-adenosyl-L-methionine + phosphate + diphosphate. It participates in amino-acid biosynthesis; S-adenosyl-L-methionine biosynthesis; S-adenosyl-L-methionine from L-methionine: step 1/1. Its function is as follows. Catalyzes the formation of S-adenosylmethionine from methionine and ATP. The reaction comprises two steps that are both catalyzed by the same enzyme: formation of S-adenosylmethionine (AdoMet) and triphosphate, and subsequent hydrolysis of the triphosphate. This is S-adenosylmethionine synthase 4 (METK4) from Populus trichocarpa (Western balsam poplar).